The sequence spans 237 residues: CD63 antigen (237 aa).

Over 1 to 11 the chain is Cytoplasmic; it reads MAVEGGMKCVK. The chain crosses the membrane as a helical span at residues 12–32; that stretch reads FLLYVLLLVFCACAVGLIAVG. The Extracellular portion of the chain corresponds to 33-51; sequence VGTHLVLNQTITHGATPSF. Asn40 carries an N-linked (GlcNAc...) asparagine glycan. The chain crosses the membrane as a helical span at residues 52 to 72; the sequence is LLPVVIIAVGAFLFLVAFVGC. Over 73-81 the chain is Cytoplasmic; sequence CGACKENYC. A helical membrane pass occupies residues 82–102; sequence LMITFAIFLSLIMLVEVAAAI. Residues 103-202 lie on the Extracellular side of the membrane; that stretch reads AGYVFRDKVR…KIAAWLRKNV (100 aa). Residues Asn130, Asn150, and Asn171 are each glycosylated (N-linked (GlcNAc...) asparagine). Residues 203-223 traverse the membrane as a helical segment; that stretch reads LVVAAAALGIAFVEILGIVLA. At 224 to 237 the chain is on the cytoplasmic side; the sequence is CCLVKSIRSGYEVM. The Lysosomal targeting motif signature appears at 233–237; it reads GYEVM.

This sequence belongs to the tetraspanin (TM4SF) family. As to quaternary structure, interacts with TIMP1 and ITGB1 and recruits TIMP1 to ITGB1. Interacts with CD9. Identified in a complex with CD9 and ITGB3. Interacts with PMEL. Interacts with KDR/VEGFR2; identified in a complex with ITGB1 and KDR/VEGFR2 and is required to recruit KDR to ITGB1 complexes. Interacts with SYT7. In terms of processing, palmitoylated at a low, basal level in unstimulated platelets. The level of palmitoylation increases when platelets are activated by thrombin (in vitro).

It localises to the cell membrane. It is found in the lysosome membrane. The protein localises to the late endosome membrane. Its subcellular location is the endosome. The protein resides in the multivesicular body. It localises to the melanosome. It is found in the secreted. The protein localises to the extracellular exosome. Its subcellular location is the cell surface. In terms of biological role, functions as a cell surface receptor for TIMP1 and plays a role in the activation of cellular signaling cascades. Plays a role in the activation of ITGB1 and integrin signaling, leading to the activation of AKT, FAK/PTK2 and MAP kinases. Promotes cell survival, reorganization of the actin cytoskeleton, cell adhesion, spreading and migration, via its role in the activation of AKT and FAK/PTK2. Plays a role in VEGFA signaling via its role in regulating the internalization of KDR/VEGFR2. Plays a role in intracellular vesicular transport processes, and is required for normal trafficking of the PMEL luminal domain that is essential for the development and maturation of melanocytes. Plays a role in the adhesion of leukocytes onto endothelial cells via its role in the regulation of SELP trafficking. May play a role in mast cell degranulation in response to Ms4a2/FceRI stimulation, but not in mast cell degranulation in response to other stimuli. This Bos taurus (Bovine) protein is CD63 antigen (CD63).